A 1081-amino-acid polypeptide reads, in one-letter code: WD repeat-containing protein 64 (1081 aa).

WD repeat units follow at residues 102–152, 153–198, 199–265, 266–314, 315–356, 357–400, 401–444, 445–488, 489–532, 533–631, 632–740, 741–803, 804–857, and 858–895; these read DPIA…ATQK, GLIT…GSSQ, ENYF…VLDS, KNFK…LEDN, LPVR…NIST, KPVG…TLSL, LQVF…TRMI, QDTK…ETGL, QVYQ…FGSG, QEMK…LIVE, RNFS…PQSS, KGSK…EGRL, LKDM…EKKF, and KQLLSWRAHSLEIIQVIYVEEKQVVLTASIDGSVRLWH. Residues 726–745 are compositionally biased toward low complexity; that stretch reads CSSSQCESSKGPQSSKGSKQ. A disordered region spans residues 726–757; it reads CSSSQCESSKGPQSSKGSKQSIHDSEVKGEQT. Over residues 746 to 756 the composition is skewed to basic and acidic residues; the sequence is SIHDSEVKGEQ. The disordered stretch occupies residues 1036 to 1060; it reads DSSDGITGKKKGGHVQREKAPRRRS. Residues 1043–1060 show a composition bias toward basic residues; that stretch reads GKKKGGHVQREKAPRRRS.

The sequence is that of WD repeat-containing protein 64 (WDR64) from Homo sapiens (Human).